We begin with the raw amino-acid sequence, 839 residues long: Phenylalanine--tRNA ligase beta subunit (839 aa).

The 125-residue stretch at 42–166 folds into the tRNA-binding domain; the sequence is GELTGPIVIG…PPSVEGHQLV (125 aa). The B5 domain occupies 421–496; sequence PEMPRQTINA…RKIGFDRIKA (76 aa). Asp474, Asp480, Glu483, and Glu484 together coordinate Mg(2+). The 94-residue stretch at 745–838 folds into the FDX-ACB domain; that stretch reads SSFPVAKEDV…AEETCGAQLR (94 aa).

Belongs to the phenylalanyl-tRNA synthetase beta subunit family. Type 1 subfamily. Tetramer of two alpha and two beta subunits. It depends on Mg(2+) as a cofactor.

The protein resides in the cytoplasm. The enzyme catalyses tRNA(Phe) + L-phenylalanine + ATP = L-phenylalanyl-tRNA(Phe) + AMP + diphosphate + H(+). The chain is Phenylalanine--tRNA ligase beta subunit from Cutibacterium acnes (strain DSM 16379 / KPA171202) (Propionibacterium acnes).